The chain runs to 427 residues: Nuclear distribution protein PAC1-2 (427 aa).

The 33-residue stretch at 8 to 40 (QKDDLNKSIAEYLYAQDLTEIADSLCARLSLDY) folds into the LisH domain. A coiled-coil region spans residues 58–82 (SVIRLQKKLIESENRYTALQEDIAA). WD repeat units lie at residues 106–147 (SHRA…RTLK), 149–187 (HTREVWGVDFDSKGSFLATCSSDLSIKVWDTQQWDNAGY), 194–233 (GHEHTVSTVKFLPGDDLIASASRDKTIRIWEVATTFCIRT), 236–275 (GHEDWVRMTVPSTDGTLLGSCSSDNTARVWDPTSGVMKME), 278–336 (GHGH…ELRT), 339–378 (GHNDWIRGLVFHPSGKHLLSASDDKTIRVWELSTGRCMXV), and 381–420 (AHSHFITCLAWGPPVSAVARVELPRTPFCGDPKPIASRIM).

This sequence belongs to the WD repeat LIS1/nudF family. As to quaternary structure, self-associates. Interacts with NDL1 and dynein.

Its subcellular location is the cytoplasm. It is found in the cytoskeleton. It localises to the spindle pole. Positively regulates the activity of the minus-end directed microtubule motor protein dynein. May enhance dynein-mediated microtubule sliding by targeting dynein to the microtubule plus end. Required for nuclear migration during vegetative growth as well as development. Required for retrograde early endosome (EE) transport from the hyphal tip. Required for localization of dynein to the mitotic spindle poles. Recruits additional proteins to the dynein complex at SPBs. This chain is Nuclear distribution protein PAC1-2, found in Postia placenta (strain ATCC 44394 / Madison 698-R) (Brown rot fungus).